The following is a 451-amino-acid chain: uncharacterized protein (451 aa).

Positions 1–451 (MSETENKTTT…KKEAAKNKSK (451 aa)) are disordered. Low complexity predominate over residues 9–22 (TTETPTTTDSTVTT). A compositionally biased stretch (polar residues) spans 44–54 (VKNQLSNTRTR). The span at 73 to 99 (KLIDTKERKEKKEKKEKEPKEPKEPKE) shows a compositional bias: basic and acidic residues. Residues 114–147 (GDEEEDEEKEEDEEQKEEQSQEEDSEESEEEQNS) show a composition bias toward acidic residues. Positions 152–162 (KKKKKQAKKVA) are enriched in basic residues. Basic and acidic residues-rich tracts occupy residues 163 to 192 (KKET…EKEA), 199 to 210 (STEKKEKEEKPK), and 217 to 230 (KKDQ…KDGD). Positions 232-244 (STTTTATATTTTD) are enriched in low complexity. Composition is skewed to basic and acidic residues over residues 284-303 (TEEK…ETKK) and 311-340 (AAAE…DDKP). Positions 341 to 355 (AATTTTTTAAAATTT) are enriched in low complexity. Positions 356-383 (EEPKEKITKPAADKKKAPANKKAEKDQS) are enriched in basic and acidic residues. Over residues 393–425 (TTTATTTTTNKDATAPTTTTNKDATAPTTTTTK) the composition is skewed to low complexity. Residues 441 to 451 (PKKEAAKNKSK) show a composition bias toward basic and acidic residues.

This is an uncharacterized protein from Dictyostelium discoideum (Social amoeba).